We begin with the raw amino-acid sequence, 1379 residues long: Increased rDNA silencing protein 4 homolog (1379 aa).

Disordered stretches follow at residues 1–25 (MDAIHPVSLRNSKRHPLLHSERNLS), 138–159 (TSTRKRSLTVPTPRTSFPHHPR), 240–314 (EFDF…PLPS), 337–370 (SQPFKSAEPLSSAIPLPNPMSEKMRNGASKQAIM), 534–573 (ASKRAALSQQTESASKSSSNISEMCDSHPPSNFSISASQQ), 768–816 (TDLH…NDIG), 1047–1110 (DAPS…KDSQ), and 1168–1208 (AVHE…DGKY). Over residues 250-259 (PSDKNLEKLK) the composition is skewed to basic and acidic residues. A compositionally biased stretch (polar residues) spans 262-287 (ASKQASESQSLKNMESLSLARSSPIL). Over residues 541–555 (SQQTESASKSSSNIS) the composition is skewed to low complexity. Over residues 562–573 (PPSNFSISASQQ) the composition is skewed to polar residues. Basic residues predominate over residues 770 to 780 (LHRKPRRKHKS). Over residues 793–802 (DESPQSDEVE) the composition is skewed to acidic residues. The 90-residue stretch at 1240 to 1329 (AANKGYLLSK…DSVWLSSKRM (90 aa)) folds into the EH domain. The EF-hand domain occupies 1273–1308 (APTSVLAKIYDLVDRHHTGVLGRDEFIVGMFLIDQY).

The protein belongs to the IRS4 family.

Functionally, positive regulator of phosphatidylinositol 4,5-bisphosphate turnover and negatively regulates signaling through the cell integrity pathway. Involved in rDNA silencing. This is Increased rDNA silencing protein 4 homolog from Schizosaccharomyces pombe (strain 972 / ATCC 24843) (Fission yeast).